A 135-amino-acid chain; its full sequence is Large ribosomal subunit protein eL32 (135 aa).

The protein belongs to the eukaryotic ribosomal protein eL32 family.

This chain is Large ribosomal subunit protein eL32, found in Methanococcus maripaludis (strain C7 / ATCC BAA-1331).